A 530-amino-acid chain; its full sequence is uncharacterized protein (530 aa).

This is an uncharacterized protein from Leptospira interrogans serogroup Icterohaemorrhagiae serovar Lai (strain 56601).